The sequence spans 146 residues: Protein MGF 100-3L (146 aa).

This sequence belongs to the asfivirus MGF 100 family.

In terms of biological role, plays a role in virus cell tropism, and may be required for efficient virus replication in macrophages. This Ornithodoros (relapsing fever ticks) protein is Protein MGF 100-3L.